The following is a 172-amino-acid chain: Shikimate kinase (172 aa).

An ATP-binding site is contributed by 8-15 (GARASGKT).

It belongs to the shikimate kinase family.

It localises to the cytoplasm. The catalysed reaction is shikimate + ATP = 3-phosphoshikimate + ADP + H(+). It participates in metabolic intermediate biosynthesis; chorismate biosynthesis; chorismate from D-erythrose 4-phosphate and phosphoenolpyruvate: step 5/7. The chain is Shikimate kinase from Oleidesulfovibrio alaskensis (strain ATCC BAA-1058 / DSM 17464 / G20) (Desulfovibrio alaskensis).